The following is a 315-amino-acid chain: Three-prime repair exonuclease 1 (315 aa).

The Mg(2+) site is built by Asp-18 and Glu-20. Residue 20 to 21 participates in substrate binding; sequence EA. At Ser-78 the chain carries Phosphoserine. Residue Tyr-129 coordinates substrate. At Ser-167 the chain carries Phosphoserine. The active-site Proton donor/acceptor is His-195. Position 200 (Asp-200) interacts with Mg(2+). Residue Asp-200 coordinates substrate. The tract at residues 236–315 is necessary for endoplasmic reticulum localization; it reads TTSTGTNPRP…YGLSLAMPGQ (80 aa). Residues 243 to 315 form an interaction with UBQLN1 region; that stretch reads PRPSAVTATV…YGLSLAMPGQ (73 aa). The tract at residues 256–282 is disordered; that stretch reads RASDTGPNLRGDRSPKPAPSPKMCPGA. The segment covering 271 to 282 has biased composition (pro residues); sequence KPAPSPKMCPGA. The tract at residues 282–315 is necessary for cytoplasmic retention; that stretch reads APPGEGLLAPLGLLAFLTLAVAMLYGLSLAMPGQ.

This sequence belongs to the exonuclease superfamily. TREX family. Homodimer. Interacts (via proline-rich region) with TCERG1/CA150 (via the second WW domain). Component of the SET complex, composed of at least ANP32A, APEX1, HMGB2, NME1, SET and TREX1. Within this complex, directly interacts with SET; this interaction does not result in TREX1 inhibition. Also interacts with NME1, but only following translocation to the nucleus. Directly interacts with UBQLN1 (via ubiquitin-like domain); the interaction may control TREX1 subcellular location. It depends on Mg(2+) as a cofactor. Post-translationally, ubiquitinated, but not targeted to proteasomal degradation. Ubiquitination may be important for interaction with UBQLN1.

It localises to the nucleus. It is found in the cytoplasm. The protein resides in the cytosol. The protein localises to the endoplasmic reticulum membrane. The enzyme catalyses Exonucleolytic cleavage in the 3'- to 5'-direction to yield nucleoside 5'-phosphates.. Functionally, major cellular 3'-to-5' DNA exonuclease which digests single-stranded DNA (ssDNA) and double-stranded DNA (dsDNA) with mismatched 3' termini. Prevents cell-intrinsic initiation of autoimmunity. Acts by metabolizing DNA fragments from endogenous retroelements, including L1, LTR and SINE elements. Plays a key role in degradation of DNA fragments at cytosolic micronuclei arising from genome instability: its association with the endoplasmic reticulum membrane directs TREX1 to ruptured micronuclei, leading to micronuclear DNA degradation. Micronuclear DNA degradation is required to limit CGAS activation and subsequent inflammation. Unless degraded, these DNA fragments accumulate in the cytosol and activate the cGAS-STING innate immune signaling, leading to the production of type I interferon. Prevents chronic ATM-dependent checkpoint activation, by processing ssDNA polynucleotide species arising from the processing of aberrant DNA replication intermediates. Inefficiently degrades oxidized DNA, such as that generated upon antimicrobial reactive oxygen production or upon absorption of UV light. During GZMA-mediated cell death, contributes to DNA damage in concert with NME1. NME1 nicks one strand of DNA and TREX1 removes bases from the free 3' end to enhance DNA damage and prevent DNA end reannealing and rapid repair. The protein is Three-prime repair exonuclease 1 of Bos taurus (Bovine).